The chain runs to 953 residues: Ribonuclease E (953 aa).

Disordered stretches follow at residues 1–23 (MIDG…PDRL) and 118–314 (VAPQ…RRRP). Residues 14 to 23 (SQHEELPDRL) show a composition bias toward basic and acidic residues. Positions 127-150 (LADDEDVDDGPDYVADDSDADDEG) are enriched in acidic residues. A compositionally biased stretch (basic residues) spans 157-169 (NRRRRRGRRGRGR). Positions 183–193 (DQQSEPRAQQF) are enriched in polar residues. Residues 199 to 223 (AETDDGDDRDSEDTEAGDNGEDENG) are compositionally biased toward acidic residues. The span at 230–240 (RRRRRRRRRKS) shows a compositional bias: basic residues. Basic and acidic residues-rich tracts occupy residues 263-272 (VHERVPRAGD) and 294-311 (TRLE…DAGR). Positions 376-453 (GNIYLGIVQN…GHKGARLTTQ (78 aa)) constitute an S1 motif domain. Mg(2+) is bound by residues Asp-647 and Asp-691. Cys-749 and Cys-752 together coordinate Zn(2+). Disordered stretches follow at residues 766–808 (SAAA…APGE) and 822–953 (LAGR…IRLD). The segment covering 848–915 (DLDDTAQADF…DADVDEEDAA (68 aa)) has biased composition (acidic residues).

It belongs to the RNase E/G family. As to quaternary structure, assembles into a homotetramer formed by a dimer of dimers. Interacts with DNA-binding protein HU (hupB). The cofactor is Mg(2+). Zn(2+) is required as a cofactor.

It is found in the cytoplasm. The catalysed reaction is Endonucleolytic cleavage of single-stranded RNA in A- and U-rich regions.. In terms of biological role, endoribonuclease that plays a central role in RNA processing and decay. Plays a major role in pre-16S rRNA maturation, probably generating the mature 5'-end, and a minor role in pre-5S and pre-23S rRNA maturation. Probably also processes tRNA. RNase E and HupB jointly contribute to cellular adaptation to changing growth conditions and survival during antibiotic treatment and in the host. The chain is Ribonuclease E from Mycobacterium tuberculosis (strain ATCC 25618 / H37Rv).